The primary structure comprises 111 residues: Small ribosomal subunit protein bS16 (111 aa).

The tract at residues 92 to 111 (MDVKAKNRKARSSKQEAKEA) is disordered.

The protein belongs to the bacterial ribosomal protein bS16 family.

The sequence is that of Small ribosomal subunit protein bS16 from Rickettsia akari (strain Hartford).